A 322-amino-acid chain; its full sequence is Protein-L-isoaspartate O-methyltransferase (322 aa).

Residues 1–101 (MSGERAKRFP…AKQGDRSAAP (101 aa)) form a disordered region. The segment covering 14 to 29 (EDLKREPRKPEGRVAE) has biased composition (basic and acidic residues). 2 stretches are compositionally biased toward low complexity: residues 33-51 (AGDA…PAAA) and 76-91 (HAPA…PQGG). Ser-170 is a catalytic residue.

Belongs to the methyltransferase superfamily. L-isoaspartyl/D-aspartyl protein methyltransferase family.

The protein localises to the cytoplasm. The catalysed reaction is [protein]-L-isoaspartate + S-adenosyl-L-methionine = [protein]-L-isoaspartate alpha-methyl ester + S-adenosyl-L-homocysteine. Functionally, catalyzes the methyl esterification of L-isoaspartyl residues in peptides and proteins that result from spontaneous decomposition of normal L-aspartyl and L-asparaginyl residues. It plays a role in the repair and/or degradation of damaged proteins. The polypeptide is Protein-L-isoaspartate O-methyltransferase (Burkholderia pseudomallei (strain 1710b)).